The following is a 391-amino-acid chain: 4-hydroxy-3-methylbut-2-en-1-yl diphosphate synthase (flavodoxin) (391 aa).

[4Fe-4S] cluster-binding residues include C282, C285, C317, and E324.

It belongs to the IspG family. The cofactor is [4Fe-4S] cluster.

The catalysed reaction is (2E)-4-hydroxy-3-methylbut-2-enyl diphosphate + oxidized [flavodoxin] + H2O + 2 H(+) = 2-C-methyl-D-erythritol 2,4-cyclic diphosphate + reduced [flavodoxin]. It functions in the pathway isoprenoid biosynthesis; isopentenyl diphosphate biosynthesis via DXP pathway; isopentenyl diphosphate from 1-deoxy-D-xylulose 5-phosphate: step 5/6. In terms of biological role, converts 2C-methyl-D-erythritol 2,4-cyclodiphosphate (ME-2,4cPP) into 1-hydroxy-2-methyl-2-(E)-butenyl 4-diphosphate. The chain is 4-hydroxy-3-methylbut-2-en-1-yl diphosphate synthase (flavodoxin) from Acidothermus cellulolyticus (strain ATCC 43068 / DSM 8971 / 11B).